Here is a 209-residue protein sequence, read N- to C-terminus: MNAIAIGMIIFAYLCGSVSNAILICRLARLPDPRTSGSGNPGATNVLRLGGKLAAAGVMVFDVLKGMIPVWIGYGLGLPPFWLGLVAIAACLGHIYPIFFHFRGGKGVATALGAIAPIGYDLSGLMIGTWLLTALLSGYSSLGAIVSALIAPFYVWWFKPQFTFPVAMLSCLVLLRHHDNIQRLWHGQESRIWHRRQKDRDIDRQQSKH.

The next 5 membrane-spanning stretches (helical) occupy residues 4–24, 53–75, 80–102, 112–132, and 138–158; these read IAIG…AILI, LAAA…IGYG, PFWL…FFHF, LGAI…TWLL, and GYSS…VWWF.

The protein belongs to the PlsY family. In terms of assembly, probably interacts with PlsX.

The protein resides in the cell inner membrane. It catalyses the reaction an acyl phosphate + sn-glycerol 3-phosphate = a 1-acyl-sn-glycero-3-phosphate + phosphate. It functions in the pathway lipid metabolism; phospholipid metabolism. Its function is as follows. Catalyzes the transfer of an acyl group from acyl-phosphate (acyl-PO(4)) to glycerol-3-phosphate (G3P) to form lysophosphatidic acid (LPA). This enzyme utilizes acyl-phosphate as fatty acyl donor, but not acyl-CoA or acyl-ACP. The sequence is that of Glycerol-3-phosphate acyltransferase from Sodalis glossinidius (strain morsitans).